Here is a 188-residue protein sequence, read N- to C-terminus: Elongation factor P (188 aa).

This sequence belongs to the elongation factor P family.

The protein resides in the cytoplasm. The protein operates within protein biosynthesis; polypeptide chain elongation. In terms of biological role, involved in peptide bond synthesis. Stimulates efficient translation and peptide-bond synthesis on native or reconstituted 70S ribosomes in vitro. Probably functions indirectly by altering the affinity of the ribosome for aminoacyl-tRNA, thus increasing their reactivity as acceptors for peptidyl transferase. This is Elongation factor P from Wolbachia pipientis wMel.